The chain runs to 150 residues: Endoribonuclease YbeY (150 aa).

3 residues coordinate Zn(2+): H108, H112, and H118.

This sequence belongs to the endoribonuclease YbeY family. Zn(2+) is required as a cofactor.

It is found in the cytoplasm. Its function is as follows. Single strand-specific metallo-endoribonuclease involved in late-stage 70S ribosome quality control and in maturation of the 3' terminus of the 16S rRNA. The chain is Endoribonuclease YbeY from Methylococcus capsulatus (strain ATCC 33009 / NCIMB 11132 / Bath).